A 207-amino-acid polypeptide reads, in one-letter code: Infectivity protein P11 (207 aa).

Residues 13 to 28 (WWIVAAIGGLAAFLLL) form a helical membrane-spanning segment. Residues 64 to 95 (AALQANTQLSAQNAQLQAQMDASRLQLETQLN) adopt a coiled-coil conformation.

Its subcellular location is the virion membrane. Functionally, component of the phage ejection machinery. Pilot protein for the formation of the tube that conducts the genome into the target cell. Probably involved in penetration of the bacterial outer membrane and for making the peptidoglycan layer accessible to the viral transglycosylase. Essential for viral infectivity. The protein is Infectivity protein P11 (XI) of Enterobacteria phage PRD1 (Bacteriophage PRD1).